Here is a 1215-residue protein sequence, read N- to C-terminus: DNA-directed RNA polymerase subunit beta' (1215 aa).

Zn(2+)-binding residues include Cys60, Cys62, Cys75, and Cys78. The Mg(2+) site is built by Asp449, Asp451, and Asp453. Residues Cys818, Cys892, Cys899, and Cys902 each contribute to the Zn(2+) site.

This sequence belongs to the RNA polymerase beta' chain family. As to quaternary structure, the RNAP catalytic core consists of 2 alpha, 1 beta, 1 beta' and 1 omega subunit. When a sigma factor is associated with the core the holoenzyme is formed, which can initiate transcription. Requires Mg(2+) as cofactor. Zn(2+) is required as a cofactor.

It catalyses the reaction RNA(n) + a ribonucleoside 5'-triphosphate = RNA(n+1) + diphosphate. Functionally, DNA-dependent RNA polymerase catalyzes the transcription of DNA into RNA using the four ribonucleoside triphosphates as substrates. In Limosilactobacillus fermentum (strain NBRC 3956 / LMG 18251) (Lactobacillus fermentum), this protein is DNA-directed RNA polymerase subunit beta'.